A 209-amino-acid polypeptide reads, in one-letter code: Large ribosomal subunit protein uL4 (209 aa).

A disordered region spans residues 50-89 (MTKTKGLVSGGGKKPFKQKGTGGARQGSSRSILMPGGGTA).

This sequence belongs to the universal ribosomal protein uL4 family. Part of the 50S ribosomal subunit.

Functionally, one of the primary rRNA binding proteins, this protein initially binds near the 5'-end of the 23S rRNA. It is important during the early stages of 50S assembly. It makes multiple contacts with different domains of the 23S rRNA in the assembled 50S subunit and ribosome. In terms of biological role, forms part of the polypeptide exit tunnel. In Bdellovibrio bacteriovorus (strain ATCC 15356 / DSM 50701 / NCIMB 9529 / HD100), this protein is Large ribosomal subunit protein uL4.